The chain runs to 104 residues: Urease subunit beta (104 aa).

Belongs to the urease beta subunit family. Heterotrimer of UreA (gamma), UreB (beta) and UreC (alpha) subunits. Three heterotrimers associate to form the active enzyme.

The protein localises to the cytoplasm. It catalyses the reaction urea + 2 H2O + H(+) = hydrogencarbonate + 2 NH4(+). It participates in nitrogen metabolism; urea degradation; CO(2) and NH(3) from urea (urease route): step 1/1. This Mycolicibacterium vanbaalenii (strain DSM 7251 / JCM 13017 / BCRC 16820 / KCTC 9966 / NRRL B-24157 / PYR-1) (Mycobacterium vanbaalenii) protein is Urease subunit beta.